The sequence spans 963 residues: uncharacterized protein (963 aa).

Coiled coils occupy residues 176–236 and 373–467; these read NGRN…HIRM and DYEW…KKTV. The helical transmembrane segment at 468-488 threads the bilayer; sequence IAAGMLFIVLFSLLQQWIPAI. 2 coiled-coil regions span residues 536–570 and 647–789; these read RNKQHLLTQRAALQQKEAAYERVIQQFEQWEAEMA and ALHT…LEAS.

Its subcellular location is the cell membrane. This is an uncharacterized protein from Bacillus subtilis (strain 168).